Consider the following 719-residue polypeptide: Delta-1-pyrroline-5-carboxylate synthase (719 aa).

Residues 1 to 293 (MDATRAFVKD…WVQVKETGVR (293 aa)) are glutamate 5-kinase. Substrate is bound by residues Ser57, Asp154, and Asn173. Residues 193–194 (SD) and 233–239 (RGGMTAK) each bind ATP. Residues 294 to 719 (DMAVAARESS…KDLPLVAQNS (426 aa)) are gamma-glutamyl phosphate reductase.

The protein in the N-terminal section; belongs to the glutamate 5-kinase family. In the C-terminal section; belongs to the gamma-glutamyl phosphate reductase family. Expressed at high levels in leaves and is inducible in roots subjected to salt stress.

The catalysed reaction is L-glutamate + ATP = L-glutamyl 5-phosphate + ADP. It carries out the reaction L-glutamate 5-semialdehyde + phosphate + NADP(+) = L-glutamyl 5-phosphate + NADPH + H(+). It functions in the pathway amino-acid biosynthesis; L-proline biosynthesis; L-glutamate 5-semialdehyde from L-glutamate: step 1/2. Its pathway is amino-acid biosynthesis; L-proline biosynthesis; L-glutamate 5-semialdehyde from L-glutamate: step 2/2. Its activity is regulated as follows. Feedback regulated by proline. In terms of biological role, P5CS plays a key role in proline biosynthesis, leading to osmoregulation in plants. The protein is Delta-1-pyrroline-5-carboxylate synthase (P5CS) of Mesembryanthemum crystallinum (Common ice plant).